The following is a 376-amino-acid chain: Erythronate-4-phosphate dehydrogenase (376 aa).

Ser45 and Thr67 together coordinate substrate. Residue Asp147 coordinates NAD(+). Arg209 is an active-site residue. Asp233 lines the NAD(+) pocket. Residue Glu238 is part of the active site. His255 serves as the catalytic Proton donor. Residue Gly258 coordinates NAD(+). Tyr259 lines the substrate pocket.

It belongs to the D-isomer specific 2-hydroxyacid dehydrogenase family. PdxB subfamily. Homodimer.

It localises to the cytoplasm. It catalyses the reaction 4-phospho-D-erythronate + NAD(+) = (R)-3-hydroxy-2-oxo-4-phosphooxybutanoate + NADH + H(+). Its pathway is cofactor biosynthesis; pyridoxine 5'-phosphate biosynthesis; pyridoxine 5'-phosphate from D-erythrose 4-phosphate: step 2/5. Functionally, catalyzes the oxidation of erythronate-4-phosphate to 3-hydroxy-2-oxo-4-phosphonooxybutanoate. The protein is Erythronate-4-phosphate dehydrogenase of Shewanella sp. (strain MR-4).